The sequence spans 592 residues: Cytosolic purine 5'-nucleotidase (592 aa).

The segment covering 1–15 (MAENNNNNNNNNNNN) has biased composition (low complexity). The disordered stretch occupies residues 1–37 (MAENNNNNNNNNNNNVSTPPHQKPHLTTGLRTSSSGL). The active-site Nucleophile is aspartate 122. Aspartate 122 and aspartate 124 together coordinate IMP. Aspartate 122 and aspartate 124 together coordinate Mg(2+). Aspartate 124 functions as the Proton donor in the catalytic mechanism. Asparagine 226 provides a ligand contact to ATP. Residues 252–273 (LTEEVADEQQQMNSPPLSSLGS) are disordered. A compositionally biased stretch (polar residues) spans 259–273 (EQQQMNSPPLSSLGS). IMP contacts are provided by arginine 299, aspartate 303, lysine 312, threonine 347, asparagine 348, serine 349, and lysine 385. Aspartate 444 serves as a coordination point for Mg(2+). Positions 547 and 550 each coordinate ATP.

Belongs to the 5'(3')-deoxyribonucleotidase family. Homotetramer. Requires Mg(2+) as cofactor.

It is found in the cytoplasm. Its subcellular location is the cytosol. The catalysed reaction is a ribonucleoside 5'-phosphate + H2O = a ribonucleoside + phosphate. The enzyme catalyses a 2'-deoxyribonucleoside + a ribonucleoside 5'-phosphate = a ribonucleoside + a 2'-deoxyribonucleoside 5'-phosphate. Broad specificity cytosolic 5'-nucleotidase that catalyzes the dephosphorylation of 6-hydroxypurine nucleoside 5'-monophosphates. In addition, possesses a phosphotransferase activity by which it can transfer a phosphate from a donor nucleoside monophosphate to an acceptor nucleoside. Through these activities regulates the purine nucleoside/nucleotide pools within the cell. In Dictyostelium discoideum (Social amoeba), this protein is Cytosolic purine 5'-nucleotidase (nt5c2).